We begin with the raw amino-acid sequence, 255 residues long: Putative cysteine-rich repeat secretory protein 27 (255 aa).

Positions 1–26 (MISKFGSVHILAVVAIQLLIIPSVSS) are cleaved as a signal peptide. Gnk2-homologous domains lie at 33–135 (YLHH…TINS) and 141–252 (YEND…LYPF).

This sequence belongs to the cysteine-rich repeat secretory protein family.

It localises to the secreted. The polypeptide is Putative cysteine-rich repeat secretory protein 27 (CRRSP27) (Arabidopsis thaliana (Mouse-ear cress)).